Consider the following 542-residue polypeptide: CTP synthase (542 aa).

The segment at Met-1–Ile-265 is amidoligase domain. Ser-13 contributes to the CTP binding site. Ser-13 is a UTP binding site. ATP is bound at residue Ser-14–Leu-19. An L-glutamine-binding site is contributed by Tyr-54. Asp-71 contributes to the ATP binding site. Mg(2+) contacts are provided by Asp-71 and Glu-139. Residues Asp-146–Glu-148, Lys-186–Gln-191, and Lys-222 each bind CTP. UTP contacts are provided by residues Lys-186–Gln-191 and Lys-222. ATP is bound at residue Arg-238 to Val-240. Residues Thr-291–Leu-541 enclose the Glutamine amidotransferase type-1 domain. Gly-353 contributes to the L-glutamine binding site. The active-site Nucleophile; for glutamine hydrolysis is the Cys-380. L-glutamine-binding positions include Phe-381–Gln-384, Glu-404, and Arg-469. Residues His-514 and Glu-516 contribute to the active site.

The protein belongs to the CTP synthase family. Homotetramer.

The enzyme catalyses UTP + L-glutamine + ATP + H2O = CTP + L-glutamate + ADP + phosphate + 2 H(+). It carries out the reaction L-glutamine + H2O = L-glutamate + NH4(+). The catalysed reaction is UTP + NH4(+) + ATP = CTP + ADP + phosphate + 2 H(+). The protein operates within pyrimidine metabolism; CTP biosynthesis via de novo pathway; CTP from UDP: step 2/2. Allosterically activated by GTP, when glutamine is the substrate; GTP has no effect on the reaction when ammonia is the substrate. The allosteric effector GTP functions by stabilizing the protein conformation that binds the tetrahedral intermediate(s) formed during glutamine hydrolysis. Inhibited by the product CTP, via allosteric rather than competitive inhibition. Its function is as follows. Catalyzes the ATP-dependent amination of UTP to CTP with either L-glutamine or ammonia as the source of nitrogen. Regulates intracellular CTP levels through interactions with the four ribonucleotide triphosphates. The sequence is that of CTP synthase from Beijerinckia indica subsp. indica (strain ATCC 9039 / DSM 1715 / NCIMB 8712).